The primary structure comprises 238 residues: Orotidine 5'-phosphate decarboxylase (238 aa).

Residues D18, K40, 67–76, T122, R183, Q192, and R213 contribute to the substrate site; that span reads DMKLLDIDNT. Catalysis depends on K69, which acts as the Proton donor.

Belongs to the OMP decarboxylase family. Type 1 subfamily. Homodimer.

It catalyses the reaction orotidine 5'-phosphate + H(+) = UMP + CO2. It participates in pyrimidine metabolism; UMP biosynthesis via de novo pathway; UMP from orotate: step 2/2. Catalyzes the decarboxylation of orotidine 5'-monophosphate (OMP) to uridine 5'-monophosphate (UMP). This is Orotidine 5'-phosphate decarboxylase from Brucella melitensis biotype 2 (strain ATCC 23457).